Consider the following 862-residue polypeptide: DNA mismatch repair protein MutS (862 aa).

An ATP-binding site is contributed by glycine 621–serine 628.

Belongs to the DNA mismatch repair MutS family.

Its function is as follows. This protein is involved in the repair of mismatches in DNA. It is possible that it carries out the mismatch recognition step. This protein has a weak ATPase activity. The polypeptide is DNA mismatch repair protein MutS (Vibrio cholerae serotype O1 (strain ATCC 39541 / Classical Ogawa 395 / O395)).